A 424-amino-acid polypeptide reads, in one-letter code: Phosphomethylpyrimidine synthase 2 (424 aa).

Residues Asn-65, Met-94, Tyr-123, His-162, Ser-184–Gly-186, Asp-225–Arg-228, and Glu-264 each bind substrate. His-268 contributes to the Zn(2+) binding site. Tyr-291 is a substrate binding site. A Zn(2+)-binding site is contributed by His-332. [4Fe-4S] cluster-binding residues include Cys-408, Cys-411, and Cys-415.

It belongs to the ThiC family. It depends on [4Fe-4S] cluster as a cofactor.

The catalysed reaction is 5-amino-1-(5-phospho-beta-D-ribosyl)imidazole + S-adenosyl-L-methionine = 4-amino-2-methyl-5-(phosphooxymethyl)pyrimidine + CO + 5'-deoxyadenosine + formate + L-methionine + 3 H(+). Its pathway is cofactor biosynthesis; thiamine diphosphate biosynthesis. Catalyzes the synthesis of the hydroxymethylpyrimidine phosphate (HMP-P) moiety of thiamine from aminoimidazole ribotide (AIR) in a radical S-adenosyl-L-methionine (SAM)-dependent reaction. This Methanothermobacter thermautotrophicus (strain ATCC 29096 / DSM 1053 / JCM 10044 / NBRC 100330 / Delta H) (Methanobacterium thermoautotrophicum) protein is Phosphomethylpyrimidine synthase 2.